The sequence spans 136 residues: SPbeta prophage-derived uncharacterized protein YonI (136 aa).

The chain is SPbeta prophage-derived uncharacterized protein YonI (yonI) from Bacillus subtilis (strain 168).